Reading from the N-terminus, the 430-residue chain is Serine--tRNA ligase (430 aa).

Residue 237 to 239 participates in L-serine binding; the sequence is TAE. 268–270 is a binding site for ATP; the sequence is RSE. Glutamate 291 serves as a coordination point for L-serine. 355–358 is an ATP binding site; it reads EISS. Residue serine 391 coordinates L-serine.

Belongs to the class-II aminoacyl-tRNA synthetase family. Type-1 seryl-tRNA synthetase subfamily. As to quaternary structure, homodimer. The tRNA molecule binds across the dimer.

It is found in the cytoplasm. The enzyme catalyses tRNA(Ser) + L-serine + ATP = L-seryl-tRNA(Ser) + AMP + diphosphate + H(+). The catalysed reaction is tRNA(Sec) + L-serine + ATP = L-seryl-tRNA(Sec) + AMP + diphosphate + H(+). The protein operates within aminoacyl-tRNA biosynthesis; selenocysteinyl-tRNA(Sec) biosynthesis; L-seryl-tRNA(Sec) from L-serine and tRNA(Sec): step 1/1. In terms of biological role, catalyzes the attachment of serine to tRNA(Ser). Is also able to aminoacylate tRNA(Sec) with serine, to form the misacylated tRNA L-seryl-tRNA(Sec), which will be further converted into selenocysteinyl-tRNA(Sec). The protein is Serine--tRNA ligase of Salmonella schwarzengrund (strain CVM19633).